A 121-amino-acid chain; its full sequence is Replication protein A 14 kDa subunit (121 aa).

Glycyl lysine isopeptide (Lys-Gly) (interchain with G-Cter in ubiquitin) cross-links involve residues Lys-39 and Lys-88.

It belongs to the replication factor A protein 3 family. Component of the canonical replication protein A complex (RPA), a heterotrimer composed of RPA1, RPA2 and RPA3. Also a component of the aRPA, the alternative replication protein A complex, a trimeric complex similar to the replication protein A complex/RPA but where RPA1 and RPA3 are associated with RPA4 instead of RPA2. In terms of processing, ubiquitinated by RFWD3 at stalled replication forks in response to DNA damage: ubiquitination by RFWD3 does not lead to degradation by the proteasome and promotes removal of the RPA complex from stalled replication forks, promoting homologous recombination.

The protein resides in the nucleus. Its function is as follows. As part of the heterotrimeric replication protein A complex (RPA/RP-A), binds and stabilizes single-stranded DNA intermediates, that form during DNA replication or upon DNA stress. It prevents their reannealing and in parallel, recruits and activates different proteins and complexes involved in DNA metabolism. Thereby, it plays an essential role both in DNA replication and the cellular response to DNA damage. In the cellular response to DNA damage, the RPA complex controls DNA repair and DNA damage checkpoint activation. Through recruitment of ATRIP activates the ATR kinase a master regulator of the DNA damage response. It is required for the recruitment of the DNA double-strand break repair factors RAD51 and RAD52 to chromatin, in response to DNA damage. Also recruits to sites of DNA damage proteins like XPA and XPG that are involved in nucleotide excision repair and is required for this mechanism of DNA repair. Also plays a role in base excision repair (BER), probably through interaction with UNG. Also recruits SMARCAL1/HARP, which is involved in replication fork restart, to sites of DNA damage. May also play a role in telomere maintenance. RPA3 has its own single-stranded DNA-binding activity and may be responsible for polarity of the binding of the complex to DNA. This is Replication protein A 14 kDa subunit (Rpa3) from Mus musculus (Mouse).